A 536-amino-acid polypeptide reads, in one-letter code: Bifunctional purine biosynthesis protein PurH (536 aa).

Positions 8 to 158 (IPAPDEVRIK…KNHAYVTVVT (151 aa)) constitute an MGS-like domain.

The protein belongs to the PurH family.

It carries out the reaction (6R)-10-formyltetrahydrofolate + 5-amino-1-(5-phospho-beta-D-ribosyl)imidazole-4-carboxamide = 5-formamido-1-(5-phospho-D-ribosyl)imidazole-4-carboxamide + (6S)-5,6,7,8-tetrahydrofolate. The catalysed reaction is IMP + H2O = 5-formamido-1-(5-phospho-D-ribosyl)imidazole-4-carboxamide. Its pathway is purine metabolism; IMP biosynthesis via de novo pathway; 5-formamido-1-(5-phospho-D-ribosyl)imidazole-4-carboxamide from 5-amino-1-(5-phospho-D-ribosyl)imidazole-4-carboxamide (10-formyl THF route): step 1/1. The protein operates within purine metabolism; IMP biosynthesis via de novo pathway; IMP from 5-formamido-1-(5-phospho-D-ribosyl)imidazole-4-carboxamide: step 1/1. The sequence is that of Bifunctional purine biosynthesis protein PurH from Sinorhizobium medicae (strain WSM419) (Ensifer medicae).